A 193-amino-acid chain; its full sequence is Segregation and condensation protein B (193 aa).

Belongs to the ScpB family. Homodimer. Homodimerization may be required to stabilize the binding of ScpA to the Smc head domains. Component of a cohesin-like complex composed of ScpA, ScpB and the Smc homodimer, in which ScpA and ScpB bind to the head domain of Smc. The presence of the three proteins is required for the association of the complex with DNA.

The protein localises to the cytoplasm. In terms of biological role, participates in chromosomal partition during cell division. May act via the formation of a condensin-like complex containing Smc and ScpA that pull DNA away from mid-cell into both cell halves. This is Segregation and condensation protein B from Clostridium botulinum (strain Kyoto / Type A2).